The sequence spans 89 residues: Small ribosomal subunit protein uS17 (89 aa).

The protein belongs to the universal ribosomal protein uS17 family. As to quaternary structure, part of the 30S ribosomal subunit.

Functionally, one of the primary rRNA binding proteins, it binds specifically to the 5'-end of 16S ribosomal RNA. This chain is Small ribosomal subunit protein uS17, found in Nocardia farcinica (strain IFM 10152).